The following is a 27-amino-acid chain: Morintide mO5 (27 aa).

One can recognise a Chitin-binding type-1 domain in the interval 1-27 (NGLCCSQYGFCGTTSQYCSRANGCQSN). Cysteine 4 and cysteine 18 are oxidised to a cystine.

As to expression, seeds (at protein level).

Its function is as follows. Chitin-binding protein which functions in defense against chitin-containing fungal pathogens. In Moringa oleifera (Horseradish tree), this protein is Morintide mO5.